The following is a 462-amino-acid chain: ATP synthase subunit beta (462 aa).

Gly-151–Thr-158 contacts ATP.

Belongs to the ATPase alpha/beta chains family. In terms of assembly, F-type ATPases have 2 components, CF(1) - the catalytic core - and CF(0) - the membrane proton channel. CF(1) has five subunits: alpha(3), beta(3), gamma(1), delta(1), epsilon(1). CF(0) has four main subunits: a(1), b(1), b'(1) and c(9-12).

The protein localises to the cell inner membrane. It carries out the reaction ATP + H2O + 4 H(+)(in) = ADP + phosphate + 5 H(+)(out). Produces ATP from ADP in the presence of a proton gradient across the membrane. The catalytic sites are hosted primarily by the beta subunits. The protein is ATP synthase subunit beta of Chlorobium phaeovibrioides (strain DSM 265 / 1930) (Prosthecochloris vibrioformis (strain DSM 265)).